The chain runs to 198 residues: Holliday junction resolvase RecU (198 aa).

A disordered region spans residues 1–21 (MVNYPHKLSSQKRQPSLSQPK). Residues 11–21 (QKRQPSLSQPK) show a composition bias toward polar residues. Positions 81, 83, 96, and 115 each coordinate Mg(2+).

It belongs to the RecU family. Mg(2+) serves as cofactor.

Its subcellular location is the cytoplasm. The catalysed reaction is Endonucleolytic cleavage at a junction such as a reciprocal single-stranded crossover between two homologous DNA duplexes (Holliday junction).. In terms of biological role, endonuclease that resolves Holliday junction intermediates in genetic recombination. Cleaves mobile four-strand junctions by introducing symmetrical nicks in paired strands. Promotes annealing of linear ssDNA with homologous dsDNA. Required for DNA repair, homologous recombination and chromosome segregation. This is Holliday junction resolvase RecU from Streptococcus pneumoniae (strain ATCC 700669 / Spain 23F-1).